A 464-amino-acid chain; its full sequence is ATP synthase subunit beta (464 aa).

153-160 (GGAGVGKT) is an ATP binding site.

Belongs to the ATPase alpha/beta chains family. F-type ATPases have 2 components, CF(1) - the catalytic core - and CF(0) - the membrane proton channel. CF(1) has five subunits: alpha(3), beta(3), gamma(1), delta(1), epsilon(1). CF(0) has three main subunits: a(1), b(2) and c(9-12). The alpha and beta chains form an alternating ring which encloses part of the gamma chain. CF(1) is attached to CF(0) by a central stalk formed by the gamma and epsilon chains, while a peripheral stalk is formed by the delta and b chains.

The protein resides in the cell membrane. The enzyme catalyses ATP + H2O + 4 H(+)(in) = ADP + phosphate + 5 H(+)(out). Produces ATP from ADP in the presence of a proton gradient across the membrane. The catalytic sites are hosted primarily by the beta subunits. The polypeptide is ATP synthase subunit beta (Alkaliphilus oremlandii (strain OhILAs) (Clostridium oremlandii (strain OhILAs))).